The following is a 544-amino-acid chain: CRISPR-associated endodeoxyribonuclease Cas12f2 (544 aa).

Residues 1–195 form a recognition domain (REC) region; it reads MNMSKTTISV…KPNERETRYV (195 aa). The tract at residues 196–326 is wedge domain (WED); it reads HISKLESPSK…YLQYTYEAEV (131 aa). Residues 327–334 form a linker region; that stretch reads EANKEYAG. A ruvC-I region spans residues 335–485; it reads CLGVDIGCSK…VYVKPDYTSQ (151 aa). Active-site residues include Asp339 and Glu430. The interval 486–520 is target nucleic acid-binding (TNB); it reads TCSSCGADKEKTERPSQAIFRCLNPTCRYYQRDIN. Zn(2+)-binding residues include Cys487, Cys490, Cys507, and Cys512. Residues 521-541 are ruvC-II; it reads ADFNAAVNIAKKALNNTEVVT. Residue Asp522 is part of the active site.

It belongs to the CRISPR-associated endonuclease Cas12f family. In terms of assembly, an asymmetric homodimer. Guide RNA is probably required for dimerization. It depends on Mg(2+) as a cofactor. Requires Zn(2+) as cofactor.

CRISPR (clustered regularly interspaced short palindromic repeat), is an adaptive immune system that provides protection against mobile genetic elements (viruses, transposable elements and conjugative plasmids). CRISPR clusters contain sequences complementary to antecedent mobile elements and target invading nucleic acids. CRISPR clusters are transcribed and processed into CRISPR RNA (crRNA), which requires a trans-encoded small RNA (tracrRNA), but not this protein (in vitro). Recognizes a short motif in the CRISPR repeat sequences (the 5' PAM or protospacer adjacent motif, TTAT in this organism) to help distinguish self versus nonself, as targets within the CRISPR locus do not have PAMs. Upon expression in E.coli of this protein, a mini CRISPR array and the probable tracrRNA, has dsDNA endonuclease activity. DNA cleavage is centered around positions 21 base pairs 3' of PAM. The mini system does not protect E.coli against transformation by foreign plasmids. The polypeptide is CRISPR-associated endodeoxyribonuclease Cas12f2 (Micrarchaeota archaeon (strain CG1_02_47_40)).